The primary structure comprises 509 residues: Lysine--tRNA ligase (509 aa).

Mg(2+) is bound by residues E418 and E425.

It belongs to the class-II aminoacyl-tRNA synthetase family. Homodimer. Requires Mg(2+) as cofactor.

The protein localises to the cytoplasm. The enzyme catalyses tRNA(Lys) + L-lysine + ATP = L-lysyl-tRNA(Lys) + AMP + diphosphate. The polypeptide is Lysine--tRNA ligase (Acinetobacter baumannii (strain AB307-0294)).